We begin with the raw amino-acid sequence, 232 residues long: Putative N-acetylmannosamine-6-phosphate 2-epimerase (232 aa).

Belongs to the NanE family.

It catalyses the reaction an N-acyl-D-glucosamine 6-phosphate = an N-acyl-D-mannosamine 6-phosphate. It functions in the pathway amino-sugar metabolism; N-acetylneuraminate degradation; D-fructose 6-phosphate from N-acetylneuraminate: step 3/5. Functionally, converts N-acetylmannosamine-6-phosphate (ManNAc-6-P) to N-acetylglucosamine-6-phosphate (GlcNAc-6-P). The chain is Putative N-acetylmannosamine-6-phosphate 2-epimerase from Borreliella afzelii (strain PKo) (Borrelia afzelii).